Here is a 262-residue protein sequence, read N- to C-terminus: Oxidoreductase AgnL4 (262 aa).

The protein belongs to the avfA family.

Its pathway is secondary metabolite biosynthesis. In terms of biological role, oxidoreductase; part of the gene cluster that mediates the biosynthesis of agnestins, dihydroxy-xanthone metabolites. The pathway begins with the assembly and cyclization of atrochrysone thioester by the non-reducing polyketide synthase Agnpks1. The atrochrysone carboxyl ACP thioesterase AgnL7 then breaks the thioester bond and releases the atrochrysone carboxylic acid as the first enzyme-free intermediate. The decarboxylase AgnL1 then catalyzes the concerted decarboxylation-elimination required to convert atochrysone carboxylic acid into emodin anthrone, which is further oxidized to emodin by the anthrone oxygenase AgnL2. Emodin then undergoes reduction catalyzed by the oxidoreductase AgnL4 to yield the dihydroquinone tautomer which is the substrate for reduction by the short chain dehydrogenase AgnL6 reduction to produce hydroxyketone, followed by AgnL8 dehydration and likely spontaneous autoxidation to chrysophanol. Baeyer-Villiger oxidation by the oxidase AgnL3 leads to monodictyphenone via cleavage of the C-10/C-10a bond of chrysophanol. Alternative cleavage at the C-4a/C-10 bond of chrysophanol also leads to the formation some cephalone F. Further conversion to agnestins A and B, requires reduction to dihydro-monodictyphenone, oxidation to agnestin C probably via an epoxide, and rearrangement to either agnestin A or agnestin B directly, although agnestin A or agnestin B can also interconvert. Within the cluster, AgnR1 is the only unassigned oxidoreductase present which could be involved in this conversion. However, AgnR1 seems not to be involved in this step, and thus genes involved in the proposed oxidation/reduction may be located elsewhere on the genome. Further agnestin A derivatives are probably formed by spontaneous decarboxylations, dehydrations and methanolysis reactions. In Paecilomyces divaricatus (Penicillium divaricatum), this protein is Oxidoreductase AgnL4.